A 350-amino-acid polypeptide reads, in one-letter code: MAAPSSLLLAALLWVPAEALSCYGDSGRPVDWFVVYKLPANSGSGDKPWKGLMYKYMDQNSEGWQDGVGHIDSKDGAVGLTLQPLYQKNSSQLAFLLYNDQPPKSSSAQDSSSRGHTKGVLLLDQEGGFWLVHSVPRFPSPASSGAYSWPPNARTYGQTLLCVSLPFSQFPGIGKQLTYTYPLVYDHKLEGIFAQKLPDLEEVTKGHHVLREPWNSSVILTSRAGTTFQSFAKFGKFGDDLYSGWLAAALGTNLQVQFWPNSPGILPSNCSGTHKILDVTETGFPGPSGPTFNATEDHSKWCVAPEGPWVCVGDMNRNKRETHRGGGTLCTQVPALWKAFRSLVKACKPC.

The signal sequence occupies residues 1–19; the sequence is MAAPSSLLLAALLWVPAEA. A disulfide bond links Cys-22 and Cys-162. N-linked (GlcNAc...) asparagine glycans are attached at residues Asn-89, Asn-215, Asn-269, and Asn-293. Intrachain disulfides connect Cys-270–Cys-350 and Cys-311–Cys-330. The active site involves His-298.

Belongs to the DNase II family. In terms of tissue distribution, ubiquitous.

It is found in the lysosome. It carries out the reaction Endonucleolytic cleavage to nucleoside 3'-phosphates and 3'-phosphooligonucleotide end-products.. In terms of biological role, hydrolyzes DNA under acidic conditions with a preference for double-stranded DNA. Plays a major role in the clearance of nucleic acids generated through apoptosis, hence preventing autoinflammation. Necessary for proper fetal development and for definitive erythropoiesis in fetal liver and bone marrow, where it degrades nuclear DNA expelled from erythroid precursor cells. This Rattus norvegicus (Rat) protein is Deoxyribonuclease-2-alpha (Dnase2).